We begin with the raw amino-acid sequence, 1954 residues long: Protein abnormal spindle (1954 aa).

The segment at 134–155 (VKNPRKFPTVGKTLQLKSPTGA) is disordered. A phosphoserine mark is found at S151 and S360. T364 bears the Phosphothreonine mark. S388, S390, S395, S398, S491, S495, S497, S501, S504, and S514 each carry phosphoserine. Positions 476–548 (KSVKGSPVKN…SSSAHAWPHA (73 aa)) are disordered. Residues 498-507 (DAPSNESLYR) are compositionally biased toward polar residues. Positions 528–548 (RSAAPANASARSSSAHAWPHA) are enriched in low complexity. In terms of domain architecture, Calponin-homology (CH) spans 836 to 968 (KETKDILLRF…LLWQLIYKFR (133 aa)). IQ domains are found at residues 1004 to 1033 (RHRA…ERTQ), 1386 to 1415 (TQAA…QLRQ), and 1467 to 1496 (QREA…KQRQ). Residues 1614-1641 (RANRSMKQARQEFVQLRTIAVHLQQKFR) adopt a coiled-coil conformation. 2 IQ domains span residues 1656-1687 (LRCS…MMDL) and 1690-1721 (QKRA…IRKR).

The protein localises to the cytoplasm. It is found in the nucleus. The protein resides in the cytoskeleton. It localises to the spindle. Its subcellular location is the microtubule organizing center. The protein localises to the perinuclear region. Functionally, required to maintain the structure of the centrosomal microtubule organizing center (MTOC) during mitosis. May have a preferential role in regulating neurogenesis. Required for germ cell mitosis and oocyte differentiation. This chain is Protein abnormal spindle, found in Drosophila melanogaster (Fruit fly).